Here is a 381-residue protein sequence, read N- to C-terminus: Cytochrome b (381 aa).

A run of 4 helical transmembrane segments spans residues 33–53 (FGSL…FLAM), 77–98 (WLIR…FLHV), 113–133 (WNIG…GYVL), and 178–198 (FFAF…VHLL). His83 and His97 together coordinate heme b. Positions 182 and 196 each coordinate heme b. His201 serves as a coordination point for a ubiquinone. Helical transmembrane passes span 226–246 (IKDA…ALFS), 288–308 (LGGV…PLLH), 320–340 (VSQT…WIGG), and 347–367 (FIII…VLMP).

This sequence belongs to the cytochrome b family. In terms of assembly, the cytochrome bc1 complex contains 11 subunits: 3 respiratory subunits (MT-CYB, CYC1 and UQCRFS1), 2 core proteins (UQCRC1 and UQCRC2) and 6 low-molecular weight proteins (UQCRH/QCR6, UQCRB/QCR7, UQCRQ/QCR8, UQCR10/QCR9, UQCR11/QCR10 and a cleavage product of UQCRFS1). This cytochrome bc1 complex then forms a dimer. The cofactor is heme b.

The protein localises to the mitochondrion inner membrane. Functionally, component of the ubiquinol-cytochrome c reductase complex (complex III or cytochrome b-c1 complex) that is part of the mitochondrial respiratory chain. The b-c1 complex mediates electron transfer from ubiquinol to cytochrome c. Contributes to the generation of a proton gradient across the mitochondrial membrane that is then used for ATP synthesis. This Ningaui yvonnae (Southern ningaui) protein is Cytochrome b (MT-CYB).